A 161-amino-acid chain; its full sequence is MKIRVGFGYDVHALVPDRELWLGGIKIEHTLGLLGHSDADVLIHAICDALLGAANMRDIGYHFPDTAGEYKNIDSKILLRDTMRLLREAGYELGNIDATVAAERPKLNPHIPLMKKTLAEVMNVDEEDISIKATTTEKLGFTGRQEGISAYATVLIQRMGS.

A divalent metal cation is bound by residues Asp-10 and His-12. Residues 10–12 (DVH) and 36–37 (HS) contribute to the 4-CDP-2-C-methyl-D-erythritol 2-phosphate site. Residue His-44 coordinates a divalent metal cation. Residues 58-60 (DIG), 134-137 (TTTE), Phe-141, and Arg-144 each bind 4-CDP-2-C-methyl-D-erythritol 2-phosphate.

Belongs to the IspF family. In terms of assembly, homotrimer. A divalent metal cation is required as a cofactor.

It catalyses the reaction 4-CDP-2-C-methyl-D-erythritol 2-phosphate = 2-C-methyl-D-erythritol 2,4-cyclic diphosphate + CMP. The protein operates within isoprenoid biosynthesis; isopentenyl diphosphate biosynthesis via DXP pathway; isopentenyl diphosphate from 1-deoxy-D-xylulose 5-phosphate: step 4/6. Involved in the biosynthesis of isopentenyl diphosphate (IPP) and dimethylallyl diphosphate (DMAPP), two major building blocks of isoprenoid compounds. Catalyzes the conversion of 4-diphosphocytidyl-2-C-methyl-D-erythritol 2-phosphate (CDP-ME2P) to 2-C-methyl-D-erythritol 2,4-cyclodiphosphate (ME-CPP) with a corresponding release of cytidine 5-monophosphate (CMP). The chain is 2-C-methyl-D-erythritol 2,4-cyclodiphosphate synthase from Parabacteroides distasonis (strain ATCC 8503 / DSM 20701 / CIP 104284 / JCM 5825 / NCTC 11152).